The following is a 313-amino-acid chain: Protein TIC 22-like, chloroplastic (313 aa).

A chloroplast-targeting transit peptide spans 1–96 (MNSNIFPPSK…RISDDGGGAR (96 aa)).

The protein belongs to the Tic22 family.

It is found in the plastid. The protein resides in the chloroplast intermembrane space. In terms of biological role, involved in protein precursor import into chloroplasts. In Arabidopsis thaliana (Mouse-ear cress), this protein is Protein TIC 22-like, chloroplastic (TIC22L).